A 154-amino-acid chain; its full sequence is Leghemoglobin-1 (154 aa).

In terms of domain architecture, Globin spans 3–151 (VLTDVQVALV…LAIIIKKEMK (149 aa)). Serine 46 contributes to the heme b binding site. Serine 46 bears the Phosphoserine mark. Histidine 64 provides a ligand contact to O2. Residues lysine 67, histidine 98, and lysine 101 each contribute to the heme b site. Tyrosine 139 bears the Nitrated tyrosine mark.

The protein belongs to the plant globin family. Monomer. In terms of processing, nitrated in effective nodules and particularly in hypoxic conditions; this mechanism may play a protective role in the symbiosis by buffering toxic peroxynitrite NO(2)(-). Nitration level decrease during nodule senescence. Post-translationally, phosphorylation at Ser-46 disrupts the molecular environment of its porphyrin ring oxygen binding pocket, thus leading to a reduced oxygen consumption and to the delivery of oxygen O(2) to symbiosomes. Accumulates in developing root nodules and present in roots, especially in the upper part. Detected in leaves at low levels.

The protein localises to the cytoplasm. It localises to the cytosol. It is found in the nucleus. Leghemoglobin that reversibly binds oxygen O(2) through a pentacoordinated heme iron. In root nodules, facilitates the diffusion of oxygen to the bacteroids while preventing the bacterial nitrogenase from being inactivated by buffering dioxygen, nitric oxide and carbon monoxide, and promoting the formation of reactive oxygen species (ROS, e.g. H(2)O(2)). This role is essential for symbiotic nitrogen fixation (SNF). The protein is Leghemoglobin-1 of Lupinus luteus (European yellow lupine).